The sequence spans 445 residues: MTNFTPREIVSELDRYIIGQKQAKRAVAVALRNRWRRQQVADELRDEIAPKNIIMIGPTGVGKTEIARRLARLAQAPFIKVEASKFTEVGYVGRDVESMVRDLLDLAIIMIREEEARKVRVKAEDLAEERLLDLLLPGAQSRDPDLSGEEAGEGGTRDKLRKLLRKGALDERKVELEVQAAQMPMMEVFTPQGTEEMGINFKEMFGNLFPKKTKRRQIKVSEAREILIEQEAERLVDMEKVNTLARERVEQSGIIFIDEIDKIAGQNGRQGPDVSREGVQRDILPIVEGSTVSTKYGPVKTDHILFVAAGAFHVAKPSDLIPELQGRFPIRVELTSLGEEEFFRILTEPKNALIRQYEALMETEGIRLHFTEEAIREIARIATQVNSQTENIGARRLHTIMEKLLEELSFEAPEHREQSVEIDVDYVRKQLSDIARDEDLSRYIL.

ATP-binding positions include Ile-18, 60-65 (GVGKTE), Asp-258, Glu-323, and Arg-395.

Belongs to the ClpX chaperone family. HslU subfamily. As to quaternary structure, a double ring-shaped homohexamer of HslV is capped on each side by a ring-shaped HslU homohexamer. The assembly of the HslU/HslV complex is dependent on binding of ATP.

The protein localises to the cytoplasm. In terms of biological role, ATPase subunit of a proteasome-like degradation complex; this subunit has chaperone activity. The binding of ATP and its subsequent hydrolysis by HslU are essential for unfolding of protein substrates subsequently hydrolyzed by HslV. HslU recognizes the N-terminal part of its protein substrates and unfolds these before they are guided to HslV for hydrolysis. The sequence is that of ATP-dependent protease ATPase subunit HslU from Syntrophotalea carbinolica (strain DSM 2380 / NBRC 103641 / GraBd1) (Pelobacter carbinolicus).